Reading from the N-terminus, the 217-residue chain is Ribonuclease T (217 aa).

The Exonuclease domain occupies 20–195 (VVVDVETAGL…YDTERTAMLF (176 aa)). The Mg(2+) site is built by Asp-23, Glu-25, His-182, and Asp-187. The active-site Proton donor/acceptor is His-182.

Belongs to the RNase T family. In terms of assembly, homodimer. Mg(2+) is required as a cofactor.

Trims short 3' overhangs of a variety of RNA species, leaving a one or two nucleotide 3' overhang. Responsible for the end-turnover of tRNA: specifically removes the terminal AMP residue from uncharged tRNA (tRNA-C-C-A). Also appears to be involved in tRNA biosynthesis. This is Ribonuclease T from Blochmanniella pennsylvanica (strain BPEN).